A 269-amino-acid chain; its full sequence is NAD kinase (269 aa).

Aspartate 45 (proton acceptor) is an active-site residue. Residues 45 to 46, 122 to 123, arginine 149, aspartate 151, and alanine 186 contribute to the NAD(+) site; these read DG and NE.

This sequence belongs to the NAD kinase family. A divalent metal cation serves as cofactor.

It localises to the cytoplasm. The catalysed reaction is NAD(+) + ATP = ADP + NADP(+) + H(+). Functionally, involved in the regulation of the intracellular balance of NAD and NADP, and is a key enzyme in the biosynthesis of NADP. Catalyzes specifically the phosphorylation on 2'-hydroxyl of the adenosine moiety of NAD to yield NADP. The sequence is that of NAD kinase from Staphylococcus aureus (strain Mu3 / ATCC 700698).